The chain runs to 360 residues: Phospho-N-acetylmuramoyl-pentapeptide-transferase (360 aa).

Transmembrane regions (helical) follow at residues 27 to 47 (GAFLTALIFGFVFGKPLINVL), 69 to 89 (VGTPTMGGLLIVGALLFSTLM), 93 to 113 (WDNPFVWLVLFVTMSFGLIGF), 134 to 154 (LLLGFVIAIVAALWASWNHPA), 168 to 188 (VLLNLGYLYVPFCICVIVGAA), 199 to 219 (GLAIMPVMIAAGTLGIIAYAV), 239 to 259 (ILIFTSALFGGGLGFLWYNAP), 262 to 282 (AVFMGDTGSLALGGALGAIAI), 288 to 308 (LVLAIVGGLFVVEALSVIIQV), and 337 to 357 (TIVIRFWIISLILAMIGLATL).

It belongs to the glycosyltransferase 4 family. MraY subfamily. Requires Mg(2+) as cofactor.

The protein localises to the cell inner membrane. It carries out the reaction UDP-N-acetyl-alpha-D-muramoyl-L-alanyl-gamma-D-glutamyl-meso-2,6-diaminopimeloyl-D-alanyl-D-alanine + di-trans,octa-cis-undecaprenyl phosphate = di-trans,octa-cis-undecaprenyl diphospho-N-acetyl-alpha-D-muramoyl-L-alanyl-D-glutamyl-meso-2,6-diaminopimeloyl-D-alanyl-D-alanine + UMP. It functions in the pathway cell wall biogenesis; peptidoglycan biosynthesis. In terms of biological role, catalyzes the initial step of the lipid cycle reactions in the biosynthesis of the cell wall peptidoglycan: transfers peptidoglycan precursor phospho-MurNAc-pentapeptide from UDP-MurNAc-pentapeptide onto the lipid carrier undecaprenyl phosphate, yielding undecaprenyl-pyrophosphoryl-MurNAc-pentapeptide, known as lipid I. In Ruegeria sp. (strain TM1040) (Silicibacter sp.), this protein is Phospho-N-acetylmuramoyl-pentapeptide-transferase.